The sequence spans 404 residues: Glucose-1-phosphate adenylyltransferase (404 aa).

Residues Y99, G164, 179-180, and S197 contribute to the alpha-D-glucose 1-phosphate site; that span reads EK.

Belongs to the bacterial/plant glucose-1-phosphate adenylyltransferase family. In terms of assembly, homotetramer.

It catalyses the reaction alpha-D-glucose 1-phosphate + ATP + H(+) = ADP-alpha-D-glucose + diphosphate. The protein operates within glycan biosynthesis; glycogen biosynthesis. In terms of biological role, involved in the biosynthesis of ADP-glucose, a building block required for the elongation reactions to produce glycogen. Catalyzes the reaction between ATP and alpha-D-glucose 1-phosphate (G1P) to produce pyrophosphate and ADP-Glc. The sequence is that of Glucose-1-phosphate adenylyltransferase from Nocardia farcinica (strain IFM 10152).